The chain runs to 239 residues: MKNFFAVCIIPLVVAWSATASAKEGIYITGKAGTSVVNVYGINSTFSQDEIVNGHATLPDRTKGVFGGGVAIGYDFYDPFQLPVRLELDTTFRGETDAKGGQDIIAFGDPVHINVKNQVRMTTYMVNGYYDFHNSTAFTPYISAGVGLAHVKLSNNTIPVGFGINETLSASKNNFAWGAGIGAKYAVTDNIMIDASYKYINAGKVSISKNHYAGDEHTAYDADTKAASNDFMLGITYAF.

The N-terminal stretch at 1–22 (MKNFFAVCIIPLVVAWSATASA) is a signal peptide. At 23–26 (KEGI) the chain is on the periplasmic side. The chain crosses the membrane as a beta stranded span at residues 27-36 (YITGKAGTSV). The Extracellular portion of the chain corresponds to 37 to 65 (VNVYGINSTFSQDEIVNGHATLPDRTKGV). The chain crosses the membrane as a beta stranded span at residues 66–76 (FGGGVAIGYDF). The Periplasmic segment spans residues 77–81 (YDPFQ). Residues 82 to 92 (LPVRLELDTTF) traverse the membrane as a beta stranded segment. Residues 93–120 (RGETDAKGGQDIIAFGDPVHINVKNQVR) lie on the Extracellular side of the membrane. Residues 121-132 (MTTYMVNGYYDF) traverse the membrane as a beta stranded segment. Over 133 to 137 (HNSTA) the chain is Periplasmic. The chain crosses the membrane as a beta stranded span at residues 138 to 148 (FTPYISAGVGL). The Extracellular segment spans residues 149–174 (AHVKLSNNTIPVGFGINETLSASKNN). Residues 175–185 (FAWGAGIGAKY) form a beta stranded membrane-spanning segment. Residues 186–190 (AVTDN) are Periplasmic-facing. Residues 191–200 (IMIDASYKYI) traverse the membrane as a beta stranded segment. Residues 201–230 (NAGKVSISKNHYAGDEHTAYDADTKAASND) are Extracellular-facing. Residues 231–239 (FMLGITYAF) traverse the membrane as a beta stranded segment.

The protein resides in the cell outer membrane. Functionally, haemagglutinin that facilitates the adhesion to and invasion of epithelial mammalian cells. Utilizes heparinated proteoglycan as a receptor to successfully invade host cells. The sequence is that of Outer membrane protein PagN (pagN) from Salmonella typhimurium (strain LT2 / SGSC1412 / ATCC 700720).